A 68-amino-acid polypeptide reads, in one-letter code: Peptide Hp1412 (68 aa).

Positions 1–23 are cleaved as a signal peptide; the sequence is MKTHFAIFLITLFLFQMFSQSDA. Cysteine 36 carries the post-translational modification Cysteine amide. A propeptide spanning residues 40–68 is cleaved from the precursor; it reads GLSDLYDLDEMFDGEISQADIDFLKELMR.

It belongs to the non-disulfide-bridged peptide (NDBP) superfamily. Short antimicrobial peptide (group 4) family. In terms of tissue distribution, expressed by the venom gland.

The protein resides in the secreted. Its subcellular location is the target cell membrane. Amphipathic peptide with antimicrobial activity. The polypeptide is Peptide Hp1412 (Heterometrus petersii (Asian forest scorpion)).